Consider the following 777-residue polypeptide: Ral guanine nucleotide dissociation stimulator-like 2 (777 aa).

Residues 1 to 54 (MLPRPLRLLLDTSPPGGVVLSSFRSRDPEEGGGPGGLVVGGGQEEEEEEEEEAP) form a disordered region. Ser-13 bears the Phosphoserine mark. Over residues 31-42 (GGGPGGLVVGGG) the composition is skewed to gly residues. A compositionally biased stretch (acidic residues) spans 43–54 (QEEEEEEEEEAP). Residues 88–212 (SSRRLRAGTL…GSADLIRNLR (125 aa)) enclose the N-terminal Ras-GEF domain. Positions 243-513 (LADHLAEQLT…HRVSCEVEPP (271 aa)) constitute a Ras-GEF domain. Phosphoserine is present on Ser-409. Low complexity-rich tracts occupy residues 581 to 610 (SLDS…SPRP) and 618 to 632 (ASCG…EEAS). 2 disordered regions span residues 581-644 (SLDS…GSGP) and 734-766 (RRSS…PRIK). Residues 633-644 (GGTGYGGEGSGP) show a composition bias toward gly residues. The Ras-associating domain occupies 648–735 (DCRIIRVQME…HDFLLRQRRR (88 aa)). Over residues 740-755 (TPGVTSGPSASGTPPS) the composition is skewed to low complexity.

In terms of assembly, interacts with SAMD9.

Its function is as follows. Probable guanine nucleotide exchange factor. Putative effector of Ras and/or Rap. Associates with the GTP-bound form of Rap 1A and H-Ras in vitro. The protein is Ral guanine nucleotide dissociation stimulator-like 2 (RGL2) of Homo sapiens (Human).